We begin with the raw amino-acid sequence, 461 residues long: tRNA modification GTPase MnmE (461 aa).

3 residues coordinate (6S)-5-formyl-5,6,7,8-tetrahydrofolate: R23, E88, and R127. One can recognise a TrmE-type G domain in the interval 223 to 383 (GLNTVIVGKP…LKECIKNLFF (161 aa)). Residue N233 coordinates K(+). Residues 233–238 (NVGKSS), 252–258 (TEIPGTT), and 277–280 (DTAG) each bind GTP. Mg(2+) is bound at residue S237. K(+) contacts are provided by T252, I254, and T257. T258 provides a ligand contact to Mg(2+). K461 contacts (6S)-5-formyl-5,6,7,8-tetrahydrofolate.

The protein belongs to the TRAFAC class TrmE-Era-EngA-EngB-Septin-like GTPase superfamily. TrmE GTPase family. In terms of assembly, homodimer. Heterotetramer of two MnmE and two MnmG subunits. The cofactor is K(+).

The protein resides in the cytoplasm. Exhibits a very high intrinsic GTPase hydrolysis rate. Involved in the addition of a carboxymethylaminomethyl (cmnm) group at the wobble position (U34) of certain tRNAs, forming tRNA-cmnm(5)s(2)U34. The protein is tRNA modification GTPase MnmE of Clostridium botulinum (strain Langeland / NCTC 10281 / Type F).